Here is a 325-residue protein sequence, read N- to C-terminus: Isoaspartyl peptidase/L-asparaginase (325 aa).

The Nucleophile role is filled by Thr-193. Substrate is bound by residues Arg-221–Asp-224 and Thr-243–Gly-246.

The protein belongs to the Ntn-hydrolase family. In terms of assembly, heterotetramer of two alpha and two beta chains arranged as a dimer of alpha/beta heterodimers. Post-translationally, cleaved into an alpha and beta chain by autocatalysis; this activates the enzyme. The N-terminal residue of the beta subunit is responsible for the nucleophile hydrolase activity. In terms of tissue distribution, developing seeds.

The catalysed reaction is Cleavage of a beta-linked Asp residue from the N-terminus of a polypeptide.. Acts in asparagine catabolism but also in the final steps of protein degradation via hydrolysis of a range of isoaspartyl dipeptides. This is Isoaspartyl peptidase/L-asparaginase from Lupinus angustifolius (Narrow-leaved blue lupine).